Consider the following 123-residue polypeptide: Large ribosomal subunit protein uL18 (123 aa).

It belongs to the universal ribosomal protein uL18 family. As to quaternary structure, part of the 50S ribosomal subunit; part of the 5S rRNA/L5/L18/L25 subcomplex. Contacts the 5S and 23S rRNAs.

Functionally, this is one of the proteins that bind and probably mediate the attachment of the 5S RNA into the large ribosomal subunit, where it forms part of the central protuberance. The sequence is that of Large ribosomal subunit protein uL18 from Wolbachia pipientis subsp. Culex pipiens (strain wPip).